Consider the following 413-residue polypeptide: Protein CDKN2AIP homolog B (413 aa).

Positions 21–118 (LERVRGQCES…TTRDELVAKV (98 aa)) constitute an XRN2-binding (XTBD) domain. Positions 118–266 (VKKRGNSSSN…PTRRFTTEHT (149 aa)) are disordered. Basic and acidic residues predominate over residues 183–193 (NKREAHSRTDV).

Belongs to the CARF family.

The protein localises to the nucleus. Its subcellular location is the nucleoplasm. In terms of biological role, may regulate DNA damage response and cell proliferation. The polypeptide is Protein CDKN2AIP homolog B (cdkn2aip-b) (Xenopus laevis (African clawed frog)).